A 201-amino-acid polypeptide reads, in one-letter code: Peptide deformylase 2 (201 aa).

The Fe cation site is built by cysteine 121 and histidine 163. Glutamate 164 is an active-site residue. Histidine 167 is a binding site for Fe cation.

The protein belongs to the polypeptide deformylase family. Fe(2+) is required as a cofactor.

It carries out the reaction N-terminal N-formyl-L-methionyl-[peptide] + H2O = N-terminal L-methionyl-[peptide] + formate. Its function is as follows. Removes the formyl group from the N-terminal Met of newly synthesized proteins. Requires at least a dipeptide for an efficient rate of reaction. N-terminal L-methionine is a prerequisite for activity but the enzyme has broad specificity at other positions. The chain is Peptide deformylase 2 from Prochlorococcus marinus (strain MIT 9313).